Here is a 215-residue protein sequence, read N- to C-terminus: Adenylate kinase (215 aa).

10–15 (GAGKGT) lines the ATP pocket. Residues 30 to 59 (STGDIFRANISGKTELGMKAKGYMDKGLLV) form an NMP region. AMP contacts are provided by residues threonine 31, arginine 36, 57–59 (LLV), 85–88 (GFPR), and glutamine 92. An LID region spans residues 126–163 (GRRVCSKCGASYHIEYNPTKVEGICDLCGSPVVQRKDD). Arginine 127 is an ATP binding site. Residues cysteine 130 and cysteine 133 each contribute to the Zn(2+) site. Residue 136–137 (SY) coordinates ATP. Cysteine 150 and cysteine 153 together coordinate Zn(2+). Residues arginine 160 and arginine 171 each contribute to the AMP site. Residue glutamine 199 participates in ATP binding.

The protein belongs to the adenylate kinase family. In terms of assembly, monomer.

The protein resides in the cytoplasm. The enzyme catalyses AMP + ATP = 2 ADP. The protein operates within purine metabolism; AMP biosynthesis via salvage pathway; AMP from ADP: step 1/1. Its function is as follows. Catalyzes the reversible transfer of the terminal phosphate group between ATP and AMP. Plays an important role in cellular energy homeostasis and in adenine nucleotide metabolism. The sequence is that of Adenylate kinase from Clostridium acetobutylicum (strain ATCC 824 / DSM 792 / JCM 1419 / IAM 19013 / LMG 5710 / NBRC 13948 / NRRL B-527 / VKM B-1787 / 2291 / W).